The chain runs to 90 residues: MNYFAVLCIFSCICLWQFSDAAPFISVQSSSQSRSQKVMNGMLRTLYDYSVQDSVNDATGHLIHTHKADFNSDVMSPEEIERVRQQLNMA.

Residues 1-21 form the signal peptide; the sequence is MNYFAVLCIFSCICLWQFSDA.

As to expression, main cells of the accessory glands of males.

The protein localises to the secreted. It is found in the extracellular space. In terms of biological role, this protein is transferred from male to female during mating and may affect egglaying and behavior after mating. The sequence is that of Accessory gland-specific peptide 26Ab (Acp26Ab) from Drosophila mauritiana (Fruit fly).